The primary structure comprises 317 residues: MAPSFITIDANDMDVDFSTTKPVQAKRTLLLAPPSIATQEDKLRDLFSTFDRSTTDLQMLDRLSAGVVSLPATTYDLVLILTDTDGTRRSEALQLLTRNVYTTLVPAMKAGAKLQTQDSALNASDAMEAVLAGLVQSDNGFEKPNFEPSAAVPLKFGLKKKNKPTPTAVPSIPTGFAAPMGIDSPVTNHDRDEDDELINEDTLLSEEDLTRPIMPPPECQPKTGRRRRACKDCTCGLADKLEAEDKERRANADKELNVMKLDTGDLNELDFTVEGKTGSCGSCALGDAFRCDGCPYMGLPAFKPGQEVQILNDVAQL.

The tract at residues 22 to 152 (PVQAKRTLLL…KPNFEPSAAV (131 aa)) is N-terminal SAM-like domain. Residues 153 to 209 (PLKFGLKKKNKPTPTAVPSIPTGFAAPMGIDSPVTNHDRDEDDELINEDTLLSEEDL) are linker. Cys-219, Cys-230, Cys-233, and Cys-235 together coordinate [2Fe-2S] cluster. The segment at 219 to 235 (CQPKTGRRRRACKDCTC) is fe-S binding site A. Cys-280, Cys-283, Cys-291, and Cys-294 together coordinate [4Fe-4S] cluster. 2 short sequence motifs (cx2C motif) span residues 280–283 (CGSC) and 291–294 (CDGC). The tract at residues 280-294 (CGSCALGDAFRCDGC) is fe-S binding site B.

Belongs to the anamorsin family. Monomer. Interacts with tah18. Interacts with mia40. The cofactor is [2Fe-2S] cluster. [4Fe-4S] cluster serves as cofactor.

It is found in the cytoplasm. Its subcellular location is the mitochondrion intermembrane space. In terms of biological role, component of the cytosolic iron-sulfur (Fe-S) protein assembly (CIA) machinery required for the maturation of extramitochondrial Fe-S proteins. Part of an electron transfer chain functioning in an early step of cytosolic Fe-S biogenesis, facilitating the de novo assembly of a [4Fe-4S] cluster on the scaffold complex cfd1-nbp35. Electrons are transferred to dre2 from NADPH via the FAD- and FMN-containing protein tah18. Tah18-dre2 are also required for the assembly of the diferric tyrosyl radical cofactor of ribonucleotide reductase (RNR), probably by providing electrons for reduction during radical cofactor maturation in the catalytic small subunit rnr2. The chain is Fe-S cluster assembly protein dre2 from Penicillium rubens (strain ATCC 28089 / DSM 1075 / NRRL 1951 / Wisconsin 54-1255) (Penicillium chrysogenum).